Here is a 239-residue protein sequence, read N- to C-terminus: Ribonuclease PH (239 aa).

Phosphate contacts are provided by residues Arg-86 and 124–126; that span reads GTR.

It belongs to the RNase PH family. In terms of assembly, homohexameric ring arranged as a trimer of dimers.

The enzyme catalyses tRNA(n+1) + phosphate = tRNA(n) + a ribonucleoside 5'-diphosphate. In terms of biological role, phosphorolytic 3'-5' exoribonuclease that plays an important role in tRNA 3'-end maturation. Removes nucleotide residues following the 3'-CCA terminus of tRNAs; can also add nucleotides to the ends of RNA molecules by using nucleoside diphosphates as substrates, but this may not be physiologically important. Probably plays a role in initiation of 16S rRNA degradation (leading to ribosome degradation) during starvation. This chain is Ribonuclease PH, found in Anaeromyxobacter dehalogenans (strain 2CP-C).